The primary structure comprises 426 residues: Dihydropyrimidine dehydrogenase (NADP(+)), chloroplastic (426 aa).

A chloroplast-targeting transit peptide spans 1–44 (MASMSFALNRFSGLSSKTTLSADFDPSSRRSFLPPTRVGLKISS). Ala45 carries the N-acetylalanine modification. Residues Asn129 and 188 to 190 (NFS) each bind substrate. Cys191 (nucleophile) is an active-site residue. 256–257 (NT) serves as a coordination point for substrate. The disordered stretch occupies residues 395–414 (VEQRKAEKRGLKSDKDWTGD).

This sequence belongs to the dihydropyrimidine dehydrogenase family. As to expression, expressed in roots, leaves, stems, siliques and flowers. Highly expressed ion dry seeds.

It localises to the plastid. The protein resides in the chloroplast. The catalysed reaction is 5,6-dihydrouracil + NADP(+) = uracil + NADPH + H(+). It functions in the pathway amino-acid biosynthesis; beta-alanine biosynthesis. Involved in pyrimidine base degradation. Catalyzes the reduction of uracil to 5,6-dihydrouracil (DHU) by using NADH as a specific cosubstrate and the reduction of thymine to 5,6-dihydrothymine (DHT). Involved in the recycling of nitrogen from nucleobases to general nitrogen metabolism. The sequence is that of Dihydropyrimidine dehydrogenase (NADP(+)), chloroplastic from Arabidopsis thaliana (Mouse-ear cress).